A 95-amino-acid chain; its full sequence is Large ribosomal subunit protein uL23 (95 aa).

The protein belongs to the universal ribosomal protein uL23 family. Part of the 50S ribosomal subunit. Contacts protein L29, and trigger factor when it is bound to the ribosome.

Functionally, one of the early assembly proteins it binds 23S rRNA. One of the proteins that surrounds the polypeptide exit tunnel on the outside of the ribosome. Forms the main docking site for trigger factor binding to the ribosome. This is Large ribosomal subunit protein uL23 from Anoxybacillus flavithermus (strain DSM 21510 / WK1).